Consider the following 285-residue polypeptide: MPKNFASDCPGESTLFLRKYQMSVQEKRSSSHLYYIPPWHLDRKYGSCSTILLDNSTASQPDLRHTLESVALAIYYNIKHRYANRSLAIFEEPVHPLPQEKLPGKSFKHDPKRNCIFRHFCTLFQVIKLTAPCAIVALVYIKRLLTSANIDLCPTNWKKIVLGTMLLASKVWRNHGLWSVDDSQNSKDTAVENMSKMEKCFLELLEFNIHVSASVYAKYYFDLCALANDHDLYFLFSFLHKDKAQKLEAMSRLCEYKDLHQDAAALKRVISMNFIGIGCSNAILS.

Residues 111–209 (PKRNCIFRHF…CFLELLEFNI (99 aa)) enclose the Cyclin N-terminal domain.

This sequence belongs to the cyclin family. Cyclin Y subfamily.

This is Cyclin-Y-like protein 1B from Homo sapiens (Human).